The following is a 95-amino-acid chain: Large ribosomal subunit protein bL25 (95 aa).

The protein belongs to the bacterial ribosomal protein bL25 family. Part of the 50S ribosomal subunit; part of the 5S rRNA/L5/L18/L25 subcomplex. Contacts the 5S rRNA. Binds to the 5S rRNA independently of L5 and L18.

Functionally, this is one of the proteins that binds to the 5S RNA in the ribosome where it forms part of the central protuberance. The sequence is that of Large ribosomal subunit protein bL25 from Actinobacillus pleuropneumoniae serotype 5b (strain L20).